The sequence spans 177 residues: MRRFILERNPTNVKNMAKLSPIPHTLLGIRKFMLERNHTSVINVAQPLFYPQPLVNMRRFILERNSTNVKNVAKPSTIFHTLLYIRQFILERNAINGIKTFTWSSSPHKHRRTHTGEKPYKCEECGKAFTASSTLSEYKTIHTGEKPCKCEECGKAFNWSSDFNKHKRIHSGQKPIL.

The C2H2-type 1; degenerate zinc-finger motif lies at 99 to 114 (KTFTWSSSPHKHRRTH). A C2H2-type 2; degenerate zinc finger spans residues 120–142 (YKCEECGKAFTASSTLSEYKTIH). A C2H2-type 3 zinc finger spans residues 148–170 (CKCEECGKAFNWSSDFNKHKRIH).

The protein localises to the nucleus. May be involved in transcriptional regulation. The polypeptide is Putative zinc finger protein 826 (ZNF826P) (Homo sapiens (Human)).